The primary structure comprises 534 residues: Anther-specific proline-rich protein APG (534 aa).

The first 35 residues, Met-1–Ala-35, serve as a signal peptide directing secretion. A compositionally biased stretch (pro residues) spans Asn-59–Lys-196. Residues Asn-59–Ile-202 are disordered. The active-site Nucleophile is the Ser-211. Catalysis depends on residues Asp-508 and His-511.

Belongs to the 'GDSL' lipolytic enzyme family. Found in sporophytic and gametophytic cell types in the anther, only in male fertile plants.

The chain is Anther-specific proline-rich protein APG (APG) from Arabidopsis thaliana (Mouse-ear cress).